The chain runs to 335 residues: Probable cyclin-H (335 aa).

This sequence belongs to the cyclin family. Cyclin C subfamily.

The protein localises to the nucleus. Functionally, regulates CDK7, the catalytic subunit of the CDK-activating kinase (CAK) enzymatic complex. The sequence is that of Probable cyclin-H (CYCH) from Echinococcus multilocularis (Fox tapeworm).